The primary structure comprises 59 residues: Large ribosomal subunit protein uL30 (59 aa).

It belongs to the universal ribosomal protein uL30 family. As to quaternary structure, part of the 50S ribosomal subunit.

The protein is Large ribosomal subunit protein uL30 of Geotalea uraniireducens (strain Rf4) (Geobacter uraniireducens).